The following is a 270-amino-acid chain: Ribitol operon repressor (270 aa).

The HTH lacI-type domain occupies 1–61 (MKKITIYDLA…INRQASMLRS (61 aa)). Positions 6-25 (IYDLAELSGVSASAVSAILN) form a DNA-binding region, H-T-H motif.

In terms of biological role, repressor for the genes of the ribitol operon. Binds D-ribulose as an inducer. The protein is Ribitol operon repressor (rbtR) of Klebsiella aerogenes (Enterobacter aerogenes).